The sequence spans 172 residues: Stellate protein CG33236/CG33240/CG33244/CG33245 (172 aa).

This sequence belongs to the casein kinase 2 subunit beta family. In terms of assembly, interacts in vitro with the casein kinase 2 alpha subunit (CkII-alpha). The relevance of such interaction is however unclear in vivo. In terms of tissue distribution, probably not expressed in wild-type flies. In males lacking the Y chromosome, it is testis-specific and constitutes the main component of star-shaped crystals.

Unknown. In males lacking the Y chromosome, its strong overexpression leads to the appearance of proteinaceous star-shaped crystals in the primary spermatocytes causing meiotic drive, possibly by interfering with normal casein kinase 2 activity. The protein is Stellate protein CG33236/CG33240/CG33244/CG33245 (Ste:CG33236) of Drosophila melanogaster (Fruit fly).